The primary structure comprises 412 residues: MTTAEPSKTVQAAFRDTAIFDLIAQEAERQRVGLELIASENFCSAEVRAAQGSVLTNKYAEGYPGKRWYGGCEVVDEVERLAIERVKQLFGAEWANVQPHSGSSANLAVYNALLEPGDTVLGMDLAHGGHLTHGSPVNFSGLRYRVVGYKVNPETELIDMEEVRRLAHEHQPKMIIAGASAYSRIIDFAAFREIADEVGALLFADIAHIAGLIAAGLHPNALPHAHVVASTTHKTLRGPRGGVILSNDPEIGAKIDRAVFPGYQGGPLEHVIAAKAVAFGEALQPEFKDYAAQIIRNAQALAGAFQNRGYRVVSGGTDNHLFVLDLRPQGLNGTKATRRLDANDITISKSTLPYDTEKILHGGGIRIGTPAITTRGMKEADMERVADLIDRALKGEDVKAEVHAFAGSFPLP.

(6S)-5,6,7,8-tetrahydrofolate contacts are provided by residues Leu125 and Gly129 to Leu131. At Lys234 the chain carries N6-(pyridoxal phosphate)lysine. A (6S)-5,6,7,8-tetrahydrofolate-binding site is contributed by Glu250.

Belongs to the SHMT family. Homodimer. Requires pyridoxal 5'-phosphate as cofactor.

It localises to the cytoplasm. The enzyme catalyses (6R)-5,10-methylene-5,6,7,8-tetrahydrofolate + glycine + H2O = (6S)-5,6,7,8-tetrahydrofolate + L-serine. The protein operates within one-carbon metabolism; tetrahydrofolate interconversion. It participates in amino-acid biosynthesis; glycine biosynthesis; glycine from L-serine: step 1/1. Its function is as follows. Catalyzes the reversible interconversion of serine and glycine with tetrahydrofolate (THF) serving as the one-carbon carrier. This reaction serves as the major source of one-carbon groups required for the biosynthesis of purines, thymidylate, methionine, and other important biomolecules. Also exhibits THF-independent aldolase activity toward beta-hydroxyamino acids, producing glycine and aldehydes, via a retro-aldol mechanism. The sequence is that of Serine hydroxymethyltransferase from Deinococcus geothermalis (strain DSM 11300 / CIP 105573 / AG-3a).